Consider the following 317-residue polypeptide: MNSFAGWMKLIDPILSRAIAIIPHLKEIINIAFKPFNGIDKLDDHDHQHLKNRILNIDEKIYYNERKPIRSFLLDNENRSNIILGYNEKIKQLEVAIVKEVISPILIHLSSQRGALIKMEEIPFLAHFEREMKHSLLLPEKDFFIQPVKKVILANLEQGLSYLLDMHPRKNDSGQTRIEYYHKIYSRGFNQESYGSPMLKNNKALELIGYSTYIWNLIGLREDLFLIQFYETGFKSTYMACFPRACSSFLYKHKNAESLDMIFSTLIIESSFIIRVAQSLSFFDDSLSDYFYPRMPLDNNIIRIKTREKENIDHWGN.

This is an uncharacterized protein from Lactuca sativa (Garden lettuce).